A 263-amino-acid polypeptide reads, in one-letter code: uncharacterized protein (263 aa).

G31–T38 is a binding site for ATP.

Belongs to the CbbQ/NirQ/NorQ/GpvN family.

This is an uncharacterized protein from Staphylococcus haemolyticus (strain JCSC1435).